We begin with the raw amino-acid sequence, 185 residues long: Ribosome-recycling factor (185 aa).

Belongs to the RRF family.

It localises to the cytoplasm. In terms of biological role, responsible for the release of ribosomes from messenger RNA at the termination of protein biosynthesis. May increase the efficiency of translation by recycling ribosomes from one round of translation to another. This chain is Ribosome-recycling factor, found in Francisella philomiragia subsp. philomiragia (strain ATCC 25017 / CCUG 19701 / FSC 153 / O#319-036).